The sequence spans 147 residues: Ribonuclease H (147 aa).

Residues D8, E46, D68, and D132 each coordinate Mg(2+).

The protein belongs to the RNase H family. In terms of assembly, monomer. Mg(2+) serves as cofactor.

It localises to the cytoplasm. It carries out the reaction Endonucleolytic cleavage to 5'-phosphomonoester.. Its function is as follows. Endonuclease that specifically degrades the RNA of RNA-DNA hybrids. In Geotalea uraniireducens (strain Rf4) (Geobacter uraniireducens), this protein is Ribonuclease H.